The primary structure comprises 424 residues: Solute carrier family 67 member A1 (424 aa).

10 helical membrane passes run 26 to 46 (ILLT…QFSI), 59 to 79 (IAFG…GPVF), 90 to 110 (AALT…AAAS), 156 to 176 (LGLC…TLVS), 184 to 204 (AILA…CIPA), 243 to 263 (IFLV…MFSI), 276 to 296 (AGYL…LVIG), 312 to 332 (VLVF…FHFC), 334 to 354 (LVPG…SMLI), and 391 to 411 (FGVP…LLVL).

It belongs to the major facilitator (TC 2.A.1) superfamily. Organic cation transporter (TC 2.A.1.19) family. In terms of assembly, interacts with RNF167. As to expression, expressed at high levels in adult and fetal kidney and liver, and adult colon. Expressed in fetal renal proximal tubules (at protein level). Expressed at lower levels in heart, brain and lung.

It is found in the apical cell membrane. In terms of biological role, may act as a transporter of organic cations based on a proton efflux antiport mechanism. May play a role in the transport of chloroquine and quinidine-related compounds in kidney. Plays a role in the regulation of lipid metabolism. The chain is Solute carrier family 67 member A1 from Homo sapiens (Human).